The chain runs to 436 residues: 3-ketoacyl-CoA thiolase (436 aa).

Cysteine 99 (acyl-thioester intermediate) is an active-site residue. Catalysis depends on proton acceptor residues histidine 392 and cysteine 422.

Belongs to the thiolase-like superfamily. Thiolase family. As to quaternary structure, heterotetramer of two alpha chains (FadJ) and two beta chains (FadI).

It localises to the cytoplasm. The enzyme catalyses an acyl-CoA + acetyl-CoA = a 3-oxoacyl-CoA + CoA. It participates in lipid metabolism; fatty acid beta-oxidation. Its function is as follows. Catalyzes the final step of fatty acid oxidation in which acetyl-CoA is released and the CoA ester of a fatty acid two carbons shorter is formed. This chain is 3-ketoacyl-CoA thiolase, found in Cronobacter sakazakii (strain ATCC BAA-894) (Enterobacter sakazakii).